A 99-amino-acid polypeptide reads, in one-letter code: Large ribosomal subunit protein eL36A (99 aa).

This sequence belongs to the eukaryotic ribosomal protein eL36 family. As to quaternary structure, component of the large ribosomal subunit (LSU). Mature yeast ribosomes consist of a small (40S) and a large (60S) subunit. The 40S small subunit contains 1 molecule of ribosomal RNA (18S rRNA) and at least 33 different proteins. The large 60S subunit contains 3 rRNA molecules (25S, 5.8S and 5S rRNA) and at least 46 different proteins.

Its subcellular location is the cytoplasm. Its function is as follows. Component of the ribosome, a large ribonucleoprotein complex responsible for the synthesis of proteins in the cell. The small ribosomal subunit (SSU) binds messenger RNAs (mRNAs) and translates the encoded message by selecting cognate aminoacyl-transfer RNA (tRNA) molecules. The large subunit (LSU) contains the ribosomal catalytic site termed the peptidyl transferase center (PTC), which catalyzes the formation of peptide bonds, thereby polymerizing the amino acids delivered by tRNAs into a polypeptide chain. The nascent polypeptides leave the ribosome through a tunnel in the LSU and interact with protein factors that function in enzymatic processing, targeting, and the membrane insertion of nascent chains at the exit of the ribosomal tunnel. This is Large ribosomal subunit protein eL36A (rpl3601) from Schizosaccharomyces pombe (strain 972 / ATCC 24843) (Fission yeast).